We begin with the raw amino-acid sequence, 176 residues long: ATP synthase subunit delta (176 aa).

The protein belongs to the ATPase delta chain family. F-type ATPases have 2 components, F(1) - the catalytic core - and F(0) - the membrane proton channel. F(1) has five subunits: alpha(3), beta(3), gamma(1), delta(1), epsilon(1). F(0) has three main subunits: a(1), b(2) and c(10-14). The alpha and beta chains form an alternating ring which encloses part of the gamma chain. F(1) is attached to F(0) by a central stalk formed by the gamma and epsilon chains, while a peripheral stalk is formed by the delta and b chains.

It is found in the cell inner membrane. Functionally, f(1)F(0) ATP synthase produces ATP from ADP in the presence of a proton or sodium gradient. F-type ATPases consist of two structural domains, F(1) containing the extramembraneous catalytic core and F(0) containing the membrane proton channel, linked together by a central stalk and a peripheral stalk. During catalysis, ATP synthesis in the catalytic domain of F(1) is coupled via a rotary mechanism of the central stalk subunits to proton translocation. In terms of biological role, this protein is part of the stalk that links CF(0) to CF(1). It either transmits conformational changes from CF(0) to CF(1) or is implicated in proton conduction. This is ATP synthase subunit delta from Campylobacter curvus (strain 525.92).